A 312-amino-acid chain; its full sequence is DNA-directed RNA polymerase subunit alpha (312 aa).

The interval 1-226 (MIEFEKPRIE…EHLDIFVNLT (226 aa)) is alpha N-terminal domain (alpha-NTD). The interval 243-312 (KEKMLEMTIE…DLGLGLRKDD (70 aa)) is alpha C-terminal domain (alpha-CTD).

It belongs to the RNA polymerase alpha chain family. In terms of assembly, homodimer. The RNAP catalytic core consists of 2 alpha, 1 beta, 1 beta' and 1 omega subunit. When a sigma factor is associated with the core the holoenzyme is formed, which can initiate transcription.

The enzyme catalyses RNA(n) + a ribonucleoside 5'-triphosphate = RNA(n+1) + diphosphate. In terms of biological role, DNA-dependent RNA polymerase catalyzes the transcription of DNA into RNA using the four ribonucleoside triphosphates as substrates. The sequence is that of DNA-directed RNA polymerase subunit alpha from Enterococcus faecalis (strain ATCC 700802 / V583).